Reading from the N-terminus, the 273-residue chain is Ribosomal RNA small subunit methyltransferase A (273 aa).

Asparagine 18, leucine 20, glycine 45, glutamate 66, aspartate 91, and asparagine 113 together coordinate S-adenosyl-L-methionine.

This sequence belongs to the class I-like SAM-binding methyltransferase superfamily. rRNA adenine N(6)-methyltransferase family. RsmA subfamily.

The protein localises to the cytoplasm. It catalyses the reaction adenosine(1518)/adenosine(1519) in 16S rRNA + 4 S-adenosyl-L-methionine = N(6)-dimethyladenosine(1518)/N(6)-dimethyladenosine(1519) in 16S rRNA + 4 S-adenosyl-L-homocysteine + 4 H(+). Specifically dimethylates two adjacent adenosines (A1518 and A1519) in the loop of a conserved hairpin near the 3'-end of 16S rRNA in the 30S particle. May play a critical role in biogenesis of 30S subunits. The chain is Ribosomal RNA small subunit methyltransferase A from Salmonella typhimurium (strain LT2 / SGSC1412 / ATCC 700720).